The sequence spans 1114 residues: Zinc finger E-box-binding homeobox 1 (1114 aa).

Disordered regions lie at residues 1–105 (MADG…EVGC) and 142–163 (APEEDQRQGTPEASGQDENGTP). The segment covering 15–30 (PRRNNVTNYNNVIEAN) has biased composition (low complexity). Over residues 149–160 (QGTPEASGQDEN) the composition is skewed to polar residues. 3 consecutive C2H2-type zinc fingers follow at residues 170–193 (LTCPYCDRGYKRFTSLKEHIKYRH), 200–222 (FSCSLCSYTFAYRTQLDRHMTSH), and 240–262 (FKCTECGKAFKYKHHLKEHLRIH). The C2H2-type 4; atypical zinc finger occupies 268–292 (YECPNCKKRFSHSGSYSSHISSKKC). Disordered stretches follow at residues 304 to 326 (SGLKTSQCSSPSLSASPGSPARP), 491 to 529 (NLKKEHSVPTNSCKNEKLPEDLTVKSEKDKNFEGETNDS), 553 to 588 (KNPPQLPQSSGTEAEKPSSPAPSETGENNLSPGQPP), and 636 to 716 (QISV…SRNS). Over residues 309 to 326 (SQCSSPSLSASPGSPARP) the composition is skewed to low complexity. Positions 504–523 (KNEKLPEDLTVKSEKDKNFE) are enriched in basic and acidic residues. Polar residues-rich tracts occupy residues 573-584 (APSETGENNLSP) and 636-681 (QISV…QNPA). The homeobox; atypical DNA-binding region spans 581–640 (NLSPGQPPLKNLLSLLKAYYALNAQPSAEELSKIADSVNLPLDVVKKWFEKMQAGQISVQ). Residues 682–716 (NTSKSQTSSGGSTQNGSRSSTPSPSPLNLSSSRNS) show a composition bias toward low complexity. The CTBP-binding motif motif lies at 767–771 (PLNLT). Composition is skewed to polar residues over residues 852–866 (AVQETPPKQTQANGS) and 874–890 (SSEGVSNVEDQNDSDST). The segment at 852–898 (AVQETPPKQTQANGSQDERQDTSSEGVSNVEDQNDSDSTPPKKKMRK) is disordered. C2H2-type zinc fingers lie at residues 904–926 (YACDLCDKIFQKSSSLLRHKYEH) and 932–954 (HECGICKKAFKHKHHLIEHMRLH). The segment at 960–981 (YQCDKCGKRFSHSGSYSQHMNH) adopts a C2H2-type 7; atypical zinc-finger fold. The disordered stretch occupies residues 989–1114 (EAEERDSTEQ…QVSEEKTNKA (126 aa)). Acidic residues predominate over residues 1031–1047 (EEEEDSEKEEEEEEEKD). A compositionally biased stretch (basic and acidic residues) spans 1048-1062 (VEGLQEEKECRKLQD). The span at 1063 to 1078 (VEEEEEVEEEEEEEEG) shows a compositional bias: acidic residues. Basic and acidic residues predominate over residues 1079-1089 (KTEGNKNDDVV).

It belongs to the delta-EF1/ZFH-1 C2H2-type zinc-finger family. Expression is developmentally regulated with high expression in mesoderm, nervous system and lens.

It is found in the nucleus. In terms of biological role, acts as a transcriptional repressor. Positively regulates neuronal differentiation. Represses transcription by binding to the E box-containing promoter. Binds to delta 1-crystallin enhancer core and represses lens-specific transcription. It also binds many other non-lens specific DNA sequences. This is Zinc finger E-box-binding homeobox 1 (ZEB1) from Gallus gallus (Chicken).